We begin with the raw amino-acid sequence, 650 residues long: Acetyl-coenzyme A synthetase (650 aa).

CoA contacts are provided by residues 191–194 (RGGR), T311, and N335. ATP contacts are provided by residues 387–389 (GEP), 411–416 (DTWWQT), D501, and R516. S524 contacts CoA. R527 is an ATP binding site. Mg(2+)-binding residues include V538, H540, and I543. R585 contributes to the CoA binding site. K610 is subject to N6-acetyllysine.

It belongs to the ATP-dependent AMP-binding enzyme family. Requires Mg(2+) as cofactor. Acetylated. Deacetylation by the SIR2-homolog deacetylase activates the enzyme.

The catalysed reaction is acetate + ATP + CoA = acetyl-CoA + AMP + diphosphate. Its function is as follows. Catalyzes the conversion of acetate into acetyl-CoA (AcCoA), an essential intermediate at the junction of anabolic and catabolic pathways. AcsA undergoes a two-step reaction. In the first half reaction, AcsA combines acetate with ATP to form acetyl-adenylate (AcAMP) intermediate. In the second half reaction, it can then transfer the acetyl group from AcAMP to the sulfhydryl group of CoA, forming the product AcCoA. This chain is Acetyl-coenzyme A synthetase, found in Vibrio vulnificus (strain YJ016).